A 449-amino-acid polypeptide reads, in one-letter code: Hyaluronidase (449 aa).

Residues 1–23 form the signal peptide; the sequence is MYHLWIKCLAAWIFLKRFNGVHV. Intrachain disulfides connect Cys-47–Cys-340 and Cys-211–Cys-227. N-linked (GlcNAc...) asparagine glycans are attached at residues Asn-67, Asn-103, and Asn-111. The Proton donor role is filled by Glu-135. Asn-153 carries an N-linked (GlcNAc...) asparagine glycan. An N-linked (GlcNAc...) asparagine glycan is attached at Asn-357. 3 cysteine pairs are disulfide-bonded: Cys-365/Cys-376, Cys-370/Cys-427, and Cys-429/Cys-438. Asn-401 is a glycosylation site (N-linked (GlcNAc...) asparagine). The region spanning 427-438 is the EGF-like domain; the sequence is CQCYQGWKGLYC.

It belongs to the glycosyl hydrolase 56 family. In terms of assembly, monomer. As to expression, expressed by the venom gland.

It localises to the secreted. The catalysed reaction is Random hydrolysis of (1-&gt;4)-linkages between N-acetyl-beta-D-glucosamine and D-glucuronate residues in hyaluronate.. Functionally, snake venom endo-hyaluronidase that degrades hyaluronan to smaller oligosaccharide fragments. In venom, it is not toxic by itself, but increases the diffusion of other venom proteins by degrading the extracellular matrix. In addition, it displays antiedematogenic activity. This Crotalus adamanteus (Eastern diamondback rattlesnake) protein is Hyaluronidase.